The sequence spans 334 residues: N-chimaerin (334 aa).

Over residues 1-10 (MPSKESWSGR) the composition is skewed to polar residues. Residues 1 to 22 (MPSKESWSGRKTNRATVHKSKQ) form a disordered region. At Thr-67 the chain carries Phosphothreonine. The Phorbol-ester/DAG-type zinc-finger motif lies at 80–130 (VHNFKVHTFRGPHWCEYCANFMWGLIAQGVKCADCGLNVHKQCSKMVPNDC). One can recognise a Rho-GAP domain in the interval 143–334 (CDLTTLVKAH…LLIKNEDILF (192 aa)). Thr-215 carries the phosphothreonine modification.

As to quaternary structure, interacts with EPHA4; effector of EPHA4 in axon guidance linking EPHA4 activation to RAC1 regulation. Post-translationally, phosphorylated. Phosphorylation is EPHA4 kinase activity-dependent. In terms of tissue distribution, in neurons in brain regions that are involved in learning and memory processes.

Functionally, GTPase-activating protein for p21-rac and a phorbol ester receptor. Involved in the assembly of neuronal locomotor circuits as a direct effector of EPHA4 in axon guidance. This chain is N-chimaerin (Chn1), found in Rattus norvegicus (Rat).